The chain runs to 551 residues: E3 ubiquitin-protein ligase TRIM8 (551 aa).

An RING-type zinc finger spans residues 15–56; sequence CPICLHVFVEPVQLPCKHNFCRGCIGEAWAKDSGLVRCPECN. 2 consecutive B box-type zinc fingers follow at residues 92 to 132 and 140 to 182; these read CVFC…ARGH and VRAW…VCDV. Positions 181 to 249 form a coiled coil; sequence DVEIRRNEIR…HQLLDEDLRQ (69 aa).

Belongs to the TRIM/RBCC family. Homodimer. Interacts with SOCS1 (via) SH2 domain and SOCS box. Interacts with HSP90AB1; prevents nucleus translocation of phosphorylated STAT3 and HSP90AB1. Interacts with MAP3K7/TAK1. Interacts with PIAS3. Interacts with TICAM1. Interacts with TRIM15; this interaction prevents TRIM8 cytoplasmic translocation. Widely expressed. Expressed in glomerular podocytes of kidneys.

It is found in the cytoplasm. The protein localises to the nucleus. Its subcellular location is the nuclear body. The catalysed reaction is S-ubiquitinyl-[E2 ubiquitin-conjugating enzyme]-L-cysteine + [acceptor protein]-L-lysine = [E2 ubiquitin-conjugating enzyme]-L-cysteine + N(6)-ubiquitinyl-[acceptor protein]-L-lysine.. The protein operates within protein modification; protein ubiquitination. E3 ubiquitin-protein ligase that participates in multiple biological processes including cell survival, differentiation, apoptosis, and in particular, the innate immune response. Participates in the activation of interferon-gamma signaling by promoting proteasomal degradation of the repressor SOCS1. Plays a positive role in the TNFalpha and IL-1beta signaling pathways. Mechanistically, induces the 'Lys-63'-linked polyubiquitination of MAP3K7/TAK1 component leading to the activation of NF-kappa-B. Also modulates STAT3 activity through negative regulation of PIAS3, either by degradation of PIAS3 through the ubiquitin-proteasome pathway or exclusion of PIAS3 from the nucleus. Negatively regulates TLR3/4-mediated innate immune response by catalyzing 'Lys-6'- and 'Lys-33'-linked polyubiquitination of TICAM1 and thereby disrupting the TICAM1-TBK1 interaction. This Homo sapiens (Human) protein is E3 ubiquitin-protein ligase TRIM8 (TRIM8).